The sequence spans 310 residues: Probable GTP 3',8-cyclase (310 aa).

One can recognise a Radical SAM core domain in the interval 5-232 (RFGRPVTNLR…RRRKYFIPID (228 aa)). Arginine 14 provides a ligand contact to GTP. Residues cysteine 21 and cysteine 25 each coordinate [4Fe-4S] cluster. S-adenosyl-L-methionine is bound at residue tyrosine 27. Cysteine 28 is a [4Fe-4S] cluster binding site. A GTP-binding site is contributed by lysine 61. Residue glycine 65 participates in S-adenosyl-L-methionine binding. Threonine 90 contributes to the GTP binding site. S-adenosyl-L-methionine is bound at residue serine 114. Lysine 150 is a binding site for GTP. Methionine 189 is an S-adenosyl-L-methionine binding site. [4Fe-4S] cluster contacts are provided by cysteine 250 and cysteine 253. 255-257 (RLR) contacts GTP. Residue cysteine 267 coordinates [4Fe-4S] cluster.

Belongs to the radical SAM superfamily. MoaA family. Requires [4Fe-4S] cluster as cofactor.

It carries out the reaction GTP + AH2 + S-adenosyl-L-methionine = (8S)-3',8-cyclo-7,8-dihydroguanosine 5'-triphosphate + 5'-deoxyadenosine + L-methionine + A + H(+). It functions in the pathway cofactor biosynthesis; molybdopterin biosynthesis. Catalyzes the cyclization of GTP to (8S)-3',8-cyclo-7,8-dihydroguanosine 5'-triphosphate. In Pyrococcus horikoshii (strain ATCC 700860 / DSM 12428 / JCM 9974 / NBRC 100139 / OT-3), this protein is Probable GTP 3',8-cyclase.